The chain runs to 739 residues: Phosphoribosylformylglycinamidine synthase subunit PurL (739 aa).

H54 is a catalytic residue. Positions 57 and 96 each coordinate ATP. E98 lines the Mg(2+) pocket. Residues 99–102 (SHNH) and R121 each bind substrate. H100 acts as the Proton acceptor in catalysis. D122 contacts Mg(2+). Residue Q245 coordinates substrate. Residue D275 participates in Mg(2+) binding. 319-321 (ESQ) is a binding site for substrate. Residues D504 and G541 each coordinate ATP. Position 542 (N542) interacts with Mg(2+). Position 544 (S544) interacts with substrate.

It belongs to the FGAMS family. In terms of assembly, monomer. Part of the FGAM synthase complex composed of 1 PurL, 1 PurQ and 2 PurS subunits.

The protein localises to the cytoplasm. The enzyme catalyses N(2)-formyl-N(1)-(5-phospho-beta-D-ribosyl)glycinamide + L-glutamine + ATP + H2O = 2-formamido-N(1)-(5-O-phospho-beta-D-ribosyl)acetamidine + L-glutamate + ADP + phosphate + H(+). It participates in purine metabolism; IMP biosynthesis via de novo pathway; 5-amino-1-(5-phospho-D-ribosyl)imidazole from N(2)-formyl-N(1)-(5-phospho-D-ribosyl)glycinamide: step 1/2. In terms of biological role, part of the phosphoribosylformylglycinamidine synthase complex involved in the purines biosynthetic pathway. Catalyzes the ATP-dependent conversion of formylglycinamide ribonucleotide (FGAR) and glutamine to yield formylglycinamidine ribonucleotide (FGAM) and glutamate. The FGAM synthase complex is composed of three subunits. PurQ produces an ammonia molecule by converting glutamine to glutamate. PurL transfers the ammonia molecule to FGAR to form FGAM in an ATP-dependent manner. PurS interacts with PurQ and PurL and is thought to assist in the transfer of the ammonia molecule from PurQ to PurL. This is Phosphoribosylformylglycinamidine synthase subunit PurL from Lactococcus lactis subsp. cremoris (strain SK11).